The following is an 849-amino-acid chain: Alanine--tRNA ligase (849 aa).

Histidine 551, histidine 555, cysteine 653, and histidine 657 together coordinate Zn(2+).

Belongs to the class-II aminoacyl-tRNA synthetase family. The cofactor is Zn(2+).

It localises to the cytoplasm. The catalysed reaction is tRNA(Ala) + L-alanine + ATP = L-alanyl-tRNA(Ala) + AMP + diphosphate. Functionally, catalyzes the attachment of alanine to tRNA(Ala) in a two-step reaction: alanine is first activated by ATP to form Ala-AMP and then transferred to the acceptor end of tRNA(Ala). Also edits incorrectly charged Ser-tRNA(Ala) and Gly-tRNA(Ala) via its editing domain. The sequence is that of Alanine--tRNA ligase from Sulfurimonas denitrificans (strain ATCC 33889 / DSM 1251) (Thiomicrospira denitrificans (strain ATCC 33889 / DSM 1251)).